A 381-amino-acid chain; its full sequence is Creatine kinase B-type (381 aa).

Ser4 is subject to Phosphoserine. Positions 11 to 98 constitute a Phosphagen kinase N-terminal domain; the sequence is KLRFPAEDEF…FDPIIEDRHG (88 aa). Thr35 carries the post-translational modification Phosphothreonine. A Glycyl lysine isopeptide (Lys-Gly) (interchain with G-Cter in ubiquitin) cross-link involves residue Lys45. Val72 contributes to the creatine binding site. Basic and acidic residues predominate over residues 96-110; that stretch reads RHGGYKPSDEHKTDL. A disordered region spans residues 96 to 123; the sequence is RHGGYKPSDEHKTDLNPDNLQGGDDLDP. Glycyl lysine isopeptide (Lys-Gly) (interchain with G-Cter in ubiquitin) cross-links involve residues Lys101 and Lys107. Tyr125 is subject to Phosphotyrosine. The region spanning 125-367 is the Phosphagen kinase C-terminal domain; the sequence is YVLSSRVRTG…KLLIEMEQRL (243 aa). ATP is bound by residues 128–132, Arg130, Arg132, and His191; that span reads SSRVR. The tract at residues 130-138 is internal MTS-like signal; that stretch reads RVRTGRSIR. At Ser199 the chain carries Phosphoserine. Glu232 serves as a coordination point for creatine. Position 236 (Arg236) interacts with ATP. Residue Tyr269 is modified to 3'-nitrotyrosine. Ser285 is a creatine binding site. ATP is bound by residues Arg292, Arg320, 320-325, and Asp335; that span reads RGTGGV. Thr322 is subject to Phosphothreonine. Lys381 participates in a covalent cross-link: Glycyl lysine isopeptide (Lys-Gly) (interchain with G-Cter in ubiquitin).

This sequence belongs to the ATP:guanido phosphotransferase family. Dimer of identical or non-identical chains, which can be either B (brain type) or M (muscle type). With MM being the major form in skeletal muscle and myocardium, MB existing in myocardium, and BB existing in many tissues, especially brain. Interacts with SLC12A6 (via C-terminus); the interaction may be required for SLC12A6 potassium-chloride cotransport activity. Ubiquitinated by the ECS(ASB9) complex, leading to its degradation by the proteasome.

Its subcellular location is the cytoplasm. It is found in the cytosol. The protein resides in the mitochondrion. The protein localises to the cell membrane. The enzyme catalyses creatine + ATP = N-phosphocreatine + ADP + H(+). Its function is as follows. Reversibly catalyzes the transfer of phosphate between ATP and various phosphogens (e.g. creatine phosphate). Creatine kinase isoenzymes play a central role in energy transduction in tissues with large, fluctuating energy demands, such as skeletal muscle, heart, brain and spermatozoa. Acts as a key regulator of adaptive thermogenesis as part of the futile creatine cycle: localizes to the mitochondria of thermogenic fat cells and acts by mediating phosphorylation of creatine to initiate a futile cycle of creatine phosphorylation and dephosphorylation. During the futile creatine cycle, creatine and N-phosphocreatine are in a futile cycle, which dissipates the high energy charge of N-phosphocreatine as heat without performing any mechanical or chemical work. The chain is Creatine kinase B-type (CKB) from Canis lupus familiaris (Dog).